Reading from the N-terminus, the 86-residue chain is Protein K3 homolog (86 aa).

The 72-residue stretch at 15–86 (NINDITQGII…LKGYIDVSIV (72 aa)) folds into the S1 motif domain.

It belongs to the poxviridae K3 protein family. In terms of assembly, interacts with host PKR kinase.

In terms of biological role, viral mimic of eIF-2-alpha that acts as a pseudosubstrate for EIF2AK2/PKR kinase. Inhibits therefore eIF-2-alpha phosphorylation by host EIF2AK2/PKR kinase and prevents protein synthesis shutoff. This is Protein K3 homolog from Sus scrofa (Pig).